We begin with the raw amino-acid sequence, 496 residues long: Pseudooxynicotine dehydrogenase (496 aa).

Residues 1-42 (MTKDGDEGSKSGVSRRKFLGSAAVGVATAGIASQLLTLSAPA) constitute a signal peptide (tat-type signal). FAD-binding residues include A69, E88, R96, W113, V285, S461, and I471.

It belongs to the flavin monoamine oxidase family. Homodimer. The cofactor is FAD. In terms of processing, predicted to be exported by the Tat system. The position of the signal peptide cleavage has not been experimentally proven.

The protein resides in the periplasm. It carries out the reaction pseudooxynicotine + 2 Fe(III)-[cytochrome c] + H2O = 4-oxo-4-(pyridin-3-yl)butanal + methylamine + 2 Fe(II)-[cytochrome c] + 2 H(+). It participates in alkaloid degradation; nicotine degradation. Its activity is regulated as follows. Strongly inhibited by Na(2)MoO(4) and FeCl(3). Activity is nearly twice as high in the presence of Na(2)WO(4). In terms of biological role, involved in nicotine degradation. Catalyzes the deamination of pseudooxynicotine to 3-succinoylsemialdehyde-pyridine. Functions as a dehydrogenase that uses the c-type cytochrome protein CycN as the physiological electron acceptor. O(2) is a poor electron acceptor. Pnao is oxidized by CycN 230 times faster than O(2) at equivalent oxidant concentrations. The sequence is that of Pseudooxynicotine dehydrogenase from Pseudomonas putida (strain DSM 28022 / S16).